The primary structure comprises 85 residues: Cell division topological specificity factor (85 aa).

This sequence belongs to the MinE family.

In terms of biological role, prevents the cell division inhibition by proteins MinC and MinD at internal division sites while permitting inhibition at polar sites. This ensures cell division at the proper site by restricting the formation of a division septum at the midpoint of the long axis of the cell. This chain is Cell division topological specificity factor, found in Stutzerimonas stutzeri (strain A1501) (Pseudomonas stutzeri).